Here is a 187-residue protein sequence, read N- to C-terminus: Protein GrpE (187 aa).

The interval 1-23 (MNNEKELKKEETSVENKEKKVAT) is disordered.

It belongs to the GrpE family. In terms of assembly, homodimer.

Its subcellular location is the cytoplasm. Functionally, participates actively in the response to hyperosmotic and heat shock by preventing the aggregation of stress-denatured proteins, in association with DnaK and GrpE. It is the nucleotide exchange factor for DnaK and may function as a thermosensor. Unfolded proteins bind initially to DnaJ; upon interaction with the DnaJ-bound protein, DnaK hydrolyzes its bound ATP, resulting in the formation of a stable complex. GrpE releases ADP from DnaK; ATP binding to DnaK triggers the release of the substrate protein, thus completing the reaction cycle. Several rounds of ATP-dependent interactions between DnaJ, DnaK and GrpE are required for fully efficient folding. The sequence is that of Protein GrpE from Mesoplasma florum (strain ATCC 33453 / NBRC 100688 / NCTC 11704 / L1) (Acholeplasma florum).